Consider the following 931-residue polypeptide: G patch domain-containing protein 1 (931 aa).

3 disordered regions span residues 1-41 (MAAR…TVRD), 73-92 (PSTFVSSRQNRADKSVLGPE), and 169-209 (QGVG…EDDD). Position 2 is an N-acetylalanine (Ala-2). A phosphoserine mark is found at Ser-6 and Ser-8. The G-patch domain maps to 152–198 (KLSVGFELLRKMGWKEGQGVGPRVKRRPRRQKPDPGVKIYGCALPPG). Residue Lys-312 forms a Glycyl lysine isopeptide (Lys-Gly) (interchain with G-Cter in SUMO2) linkage. Residues Ser-357 and Ser-477 each carry the phosphoserine modification. Disordered regions lie at residues 568 to 595 (RFTHAKEEDDSDQVEVPRDQENDVGDKQ) and 659 to 931 (LPTT…LRRQ). The span at 582–593 (EVPRDQENDVGD) shows a compositional bias: basic and acidic residues. Polar residues predominate over residues 659–668 (LPTTQASSEK). The span at 669-695 (VSQHRGPDKSRKPSRWDTSKHEKKEDS) shows a compositional bias: basic and acidic residues. Position 715 is a phosphoserine (Ser-715). The span at 769–780 (SEDEQGDSEDDQ) shows a compositional bias: acidic residues. The segment covering 786 to 802 (ANFQSSQDTDLGETSSV) has biased composition (polar residues). A compositionally biased stretch (basic residues) spans 852 to 888 (EKHKKNKDKHKAKKEHRRKKEKKKKHRKHKHKGKQKN). The segment covering 896-905 (SSESSDSSDS) has biased composition (low complexity). Positions 922-931 (RLKSLPLRRQ) are enriched in basic residues.

Belongs to the GPATCH1 family.

The protein is G patch domain-containing protein 1 (GPATCH1) of Homo sapiens (Human).